The primary structure comprises 426 residues: Glutamate-1-semialdehyde 2,1-aminomutase (426 aa).

Lys-268 bears the N6-(pyridoxal phosphate)lysine mark.

The protein belongs to the class-III pyridoxal-phosphate-dependent aminotransferase family. HemL subfamily. Pyridoxal 5'-phosphate is required as a cofactor.

The protein resides in the cytoplasm. The catalysed reaction is (S)-4-amino-5-oxopentanoate = 5-aminolevulinate. It participates in porphyrin-containing compound metabolism; protoporphyrin-IX biosynthesis; 5-aminolevulinate from L-glutamyl-tRNA(Glu): step 2/2. This is Glutamate-1-semialdehyde 2,1-aminomutase from Saccharolobus islandicus (strain Y.N.15.51 / Yellowstone #2) (Sulfolobus islandicus).